A 182-amino-acid polypeptide reads, in one-letter code: Adenine phosphoribosyltransferase (182 aa).

Belongs to the purine/pyrimidine phosphoribosyltransferase family. In terms of assembly, homodimer.

It is found in the cytoplasm. The enzyme catalyses AMP + diphosphate = 5-phospho-alpha-D-ribose 1-diphosphate + adenine. The protein operates within purine metabolism; AMP biosynthesis via salvage pathway; AMP from adenine: step 1/1. Catalyzes a salvage reaction resulting in the formation of AMP, that is energically less costly than de novo synthesis. The protein is Adenine phosphoribosyltransferase of Stutzerimonas stutzeri (strain A1501) (Pseudomonas stutzeri).